Here is an 861-residue protein sequence, read N- to C-terminus: Leucine--tRNA ligase (861 aa).

A 'HIGH' region motif is present at residues Pro42 to His52. The 'KMSKS' region signature appears at Lys619–Ser623. Lys622 provides a ligand contact to ATP.

This sequence belongs to the class-I aminoacyl-tRNA synthetase family.

The protein localises to the cytoplasm. The catalysed reaction is tRNA(Leu) + L-leucine + ATP = L-leucyl-tRNA(Leu) + AMP + diphosphate. This chain is Leucine--tRNA ligase, found in Haemophilus ducreyi (strain 35000HP / ATCC 700724).